The following is a 132-amino-acid chain: Small ribosomal subunit protein uS8 (132 aa).

It belongs to the universal ribosomal protein uS8 family. Part of the 30S ribosomal subunit. Contacts proteins S5 and S12.

Functionally, one of the primary rRNA binding proteins, it binds directly to 16S rRNA central domain where it helps coordinate assembly of the platform of the 30S subunit. The chain is Small ribosomal subunit protein uS8 from Exiguobacterium sibiricum (strain DSM 17290 / CCUG 55495 / CIP 109462 / JCM 13490 / 255-15).